The chain runs to 263 residues: MPTSIKAIKESLEAVTSLLDPLFQELATDARLGVQKALKSRQKAIQTDLAEEERLEAMLSYEKALYKKGYQAIAGIDEVGRGPLAGPVVAACVILPKYCKIKGLNDSKKIPKAKHETIYQAVKEKALAIGIGIIDNQLIDEVNIYEATKLAMLEAIKQLEGQLTQPDYLLIDAMTLDIAISQQSIIKGDANSLSIAAASIVAKVTRDQMMANYDRIFPGYGFAKNAGYGTKEHLQGLKAYGITPIHRKSFEPVKSMCCDSTNP.

Residues 71–262 (QAIAGIDEVG…VKSMCCDSTN (192 aa)) enclose the RNase H type-2 domain. A divalent metal cation-binding residues include Asp-77, Glu-78, and Asp-172.

It belongs to the RNase HII family. Mn(2+) serves as cofactor. The cofactor is Mg(2+).

It is found in the cytoplasm. The enzyme catalyses Endonucleolytic cleavage to 5'-phosphomonoester.. Endonuclease that specifically degrades the RNA of RNA-DNA hybrids. This is Ribonuclease HII from Streptococcus pyogenes serotype M4 (strain MGAS10750).